Reading from the N-terminus, the 1066-residue chain is Isoleucine--tRNA ligase (1066 aa).

The 'HIGH' region signature appears at 49 to 59 (PYVSGAIHLGT). The 'KMSKS' region motif lies at 625–629 (KMSKS). Lys-628 contributes to the ATP binding site.

This sequence belongs to the class-I aminoacyl-tRNA synthetase family. IleS type 2 subfamily. As to quaternary structure, monomer. Zn(2+) is required as a cofactor.

It localises to the cytoplasm. It catalyses the reaction tRNA(Ile) + L-isoleucine + ATP = L-isoleucyl-tRNA(Ile) + AMP + diphosphate. Functionally, catalyzes the attachment of isoleucine to tRNA(Ile). As IleRS can inadvertently accommodate and process structurally similar amino acids such as valine, to avoid such errors it has two additional distinct tRNA(Ile)-dependent editing activities. One activity is designated as 'pretransfer' editing and involves the hydrolysis of activated Val-AMP. The other activity is designated 'posttransfer' editing and involves deacylation of mischarged Val-tRNA(Ile). This Pyrococcus furiosus (strain ATCC 43587 / DSM 3638 / JCM 8422 / Vc1) protein is Isoleucine--tRNA ligase.